Reading from the N-terminus, the 103-residue chain is Auxin-responsive protein SAUR50 (103 aa).

The protein belongs to the ARG7 family.

Its function is as follows. Effector of hormonal and environmental signals in plant growth. Involved in heliotropism. The sequence is that of Auxin-responsive protein SAUR50 from Helianthus annuus (Common sunflower).